The primary structure comprises 134 residues: Profilin (134 aa).

It belongs to the profilin family. As to quaternary structure, interacts with host Tpm1. Interacts with protein A25.

It localises to the host cytoplasm. Participates in either intracellular transport of viral proteins or intercellular spread of the virus. Cellular profilins modulate actin filament dynamics (polymerization and depolymerization) via direct binding to actin through an actin-binding domain as well as by modulation of other actin-binding proteins. In contrast to cellular homologs, the poxvirus profilins seem to bind actin only weakly. This Ectromelia virus (strain Moscow) (ECTV) protein is Profilin.